Reading from the N-terminus, the 437-residue chain is Trypacidin cluster transcriptional coactivator tpcD (437 aa).

An HTH iclR-type domain is found at 75 to 144; that stretch reads LAVQSQLLSC…PQRGHVAHSP (70 aa). The H-T-H motif DNA-binding region spans 105-124; sequence IADLARLSGVPEAQLARIIR.

Specifically expressed in conidia.

The protein localises to the nucleus. Transcriptional coactivator; part of the gene cluster that mediates the biosynthesis of trypacidin, a mycotoxin with antiprotozoal activity and that plays a role in the infection process. With tpcE, coregulates the production of trypacidin. This is Trypacidin cluster transcriptional coactivator tpcD from Aspergillus fumigatus (strain ATCC MYA-4609 / CBS 101355 / FGSC A1100 / Af293) (Neosartorya fumigata).